The following is a 435-amino-acid chain: MSGFLEELLGEKLVTGGGEEVDVHSLAARGISLLGLYFGCSLSAPCAQLSASLAAFYGRLRGDAAAGPGPGPGAGASAEPEPRRRLEIVFVSSDQDQRQWQDFVRDMPWLALPYKEKHRKLKLWNKYRISNIPSLIFLDATSGKVVCRNGLLVIRDDPEGLEFPWGPKPFREVIAGPLLRSNGQSLESSSLEGSHVGVYFSAHWCPPCRSLTRVLVESYRKIKEAGQKFEIIFVSADRSEDSFKQYFSEMPWLAVPYTDEARRSRLNRLYGIQGIPTLIVLDPQGEVITRQGRVEVLNDEDCRGFPWHPKPVLELSDSNAVQLNEGPCLVLFVDSEDDGESEAAKQLIQPIAEKIIAKYKAKEEEAPLLFFVAGEDDMTDSLRDYTNLPEAAPLLTILDMSARAKYVMDVEEITPAIVEAFVNDFLAEKLKPEPI.

Residue S2 is modified to N-acetylserine. Residues 167-321 (PKPFREVIAG…VLELSDSNAV (155 aa)) enclose the Thioredoxin domain.

It belongs to the nucleoredoxin family. As to quaternary structure, associates with the phosphatase 2A holoenzyme. Interacts with PPP2CA; the interaction is direct. Interacts with DVL1 (via PDZ domain); the interaction is direct and regulated by oxidative stress.

The protein localises to the cytoplasm. It localises to the cytosol. It is found in the nucleus. The enzyme catalyses [protein]-dithiol + NAD(+) = [protein]-disulfide + NADH + H(+). The catalysed reaction is [protein]-dithiol + NADP(+) = [protein]-disulfide + NADPH + H(+). Functionally, functions as a redox-dependent negative regulator of the Wnt signaling pathway, possibly by preventing ubiquitination of DVL3 by the BCR(KLHL12) complex. May also function as a transcriptional regulator act as a regulator of protein phosphatase 2A (PP2A). This is Nucleoredoxin (NXN) from Bos taurus (Bovine).